The chain runs to 342 residues: MLKNQDLDIERKQEHIEINLTKNIESTLKSGFESIQFIHNALPEINYDNIDTTTTFLGKALQAPILISSMTGGTARARDINYRLAEAAQKAGIAMGLGSMRVLLAAADTIKTFAVRHIAPDILLLANIGAVQLNYGVTPKECQYLVDATKADALILHLNVLQELTQPEGNRNWANLLPKIREVINYLSVPVIVKEVGYGLSKQVAKSLIDVGVKTLDIAGSGGTSWSQVEAYRAKNSLQNRIASSFINWGIPTLDSLKMVREISKNVSIIASGGLKSGIDGAKAIRMGANIFGLAGQLLKAVDNSEYLVSEEIQLIIKQLKITMLCTGSRTLKDLTKAEIKL.

Substrate is bound at residue 11-12 (RK). Residues serine 68, 69–71 (SMT), serine 99, and asparagine 127 each bind FMN. Residue 99 to 101 (SMR) coordinates substrate. Glutamine 162 contacts substrate. Mg(2+) is bound at residue glutamate 163. FMN is bound by residues lysine 194, threonine 224, 274-276 (GLK), and 295-296 (AG).

It belongs to the IPP isomerase type 2 family. In terms of assembly, homooctamer. Dimer of tetramers. Requires FMN as cofactor. The cofactor is NADPH. Mg(2+) serves as cofactor.

The protein resides in the cytoplasm. It catalyses the reaction isopentenyl diphosphate = dimethylallyl diphosphate. Functionally, involved in the biosynthesis of isoprenoids. Catalyzes the 1,3-allylic rearrangement of the homoallylic substrate isopentenyl (IPP) to its allylic isomer, dimethylallyl diphosphate (DMAPP). This chain is Isopentenyl-diphosphate delta-isomerase, found in Rickettsia canadensis (strain McKiel).